A 406-amino-acid polypeptide reads, in one-letter code: uncharacterized protein (406 aa).

This sequence belongs to the glycosyltransferase group 1 family. Glycosyltransferase 4 subfamily.

This is an uncharacterized protein from Methanocaldococcus jannaschii (strain ATCC 43067 / DSM 2661 / JAL-1 / JCM 10045 / NBRC 100440) (Methanococcus jannaschii).